The primary structure comprises 264 residues: 3-methyl-2-oxobutanoate hydroxymethyltransferase (264 aa).

Mg(2+) is bound by residues aspartate 45 and aspartate 84. Residues 45 to 46 (DS), aspartate 84, and lysine 112 contribute to the 3-methyl-2-oxobutanoate site. Glutamate 114 provides a ligand contact to Mg(2+). Glutamate 181 (proton acceptor) is an active-site residue.

This sequence belongs to the PanB family. As to quaternary structure, homodecamer; pentamer of dimers. The cofactor is Mg(2+).

The protein resides in the cytoplasm. It carries out the reaction 3-methyl-2-oxobutanoate + (6R)-5,10-methylene-5,6,7,8-tetrahydrofolate + H2O = 2-dehydropantoate + (6S)-5,6,7,8-tetrahydrofolate. Its pathway is cofactor biosynthesis; (R)-pantothenate biosynthesis; (R)-pantoate from 3-methyl-2-oxobutanoate: step 1/2. In terms of biological role, catalyzes the reversible reaction in which hydroxymethyl group from 5,10-methylenetetrahydrofolate is transferred onto alpha-ketoisovalerate to form ketopantoate. This chain is 3-methyl-2-oxobutanoate hydroxymethyltransferase, found in Edwardsiella ictaluri (strain 93-146).